A 489-amino-acid chain; its full sequence is Male-specific lethal 1-like 1 (489 aa).

Disordered regions lie at residues 126–164 and 224–311; these read PMVSNDNNQQREGEQVGAMVGDSSPEDSPSGKHWNVRKG and VKKD…EDMQ. A coiled-coil region spans residues 179-227; sequence LLLQLELIEQQQKHLHNKNKEIEDLKAEKEMLMARIERMEHRLQMVKKD. The region spanning 347–466 is the PEHE domain; the sequence is TVEVPSWRES…LKQQDFDLPW (120 aa). Residues 371–389 form an interaction with KAT8 HAT domain region; it reads ECLDDSVFLKRHSKLELDE. Residues 380–394 carry the Bipartite nuclear localization signal motif; that stretch reads KRHSKLELDEKRRKR.

Belongs to the msl-1 family. In terms of assembly, component of a multisubunit histone acetyltransferase complex (MSL). Interacts (via PEHE domain) with KAT8 (via HAT domain) and MSL3 (via MRG domain); both interactions are direct.

The protein resides in the nucleus. The protein localises to the nucleoplasm. Its subcellular location is the nucleus speckle. Component of histone acetyltransferase complex. Within MSL complex, promotes ubiquitination of histone H2B. The polypeptide is Male-specific lethal 1-like 1 (msl1l1) (Danio rerio (Zebrafish)).